The following is a 524-amino-acid chain: MSQRSSQHIVGIHYAVGPKIGEGSFGVIFEGENILHSCQAQTGSKRDSSIIMANEPVAIKFEPRHSDAPQLRDEFRAYRILNGCVGIPHAYYFGQEGMHNILIIDLLGPSLEDLFEWCGRKFSVKTTCMVAKQMIDRVRAIHDHDLIYRDIKPDNFLISQYQRISPEGKVIKSCASSSNNDPNLIYMVDFGMAKQYRDPRTKQHIPYRERKSLSGTARYMSINTHFGREQSRRDDLESLGHVFFYFLRGSLPWQGLKAPNNKLKYEKIGMTKQKLNPDDLLLNNAIPYQFATYLKYARSLKFDEDPDYDYLISLMDDALRLNDLKDDGHYDWMDLNGGKGWNIKINRRANLHGYGNPNPRVNGNTARNNVNTNSKTRNTTPVATPKQQAQNSYNKDNSKSRISSNPQSFTKQQHVLKKIEPNSKYIPETHSNLQRPIKSQSQTYDSISHTQNSPFVPYSSSKANPKRSNNEHNLPNHYTNLANKNINYQSQRNYEQENDAYSDDENDTFCSKIYKYCCCCFCCC.

Residues tyrosine 14–leucine 319 form the Protein kinase domain. Residues isoleucine 20 to isoleucine 28 and lysine 60 each bind ATP. The active-site Proton acceptor is aspartate 150. 2 disordered regions span residues histidine 352 to histidine 414 and proline 427 to leucine 474. Low complexity predominate over residues arginine 360 to asparagine 373. Composition is skewed to polar residues over residues serine 374–glutamine 413 and threonine 429–leucine 474. The short motif at tyrosine 444–isoleucine 447 is the YXXZ targeting signal element. 7 S-palmitoyl cysteine lipidation sites follow: cysteine 517, cysteine 518, cysteine 519, cysteine 520, cysteine 522, cysteine 523, and cysteine 524.

This sequence belongs to the protein kinase superfamily. CK1 Ser/Thr protein kinase family. Casein kinase I subfamily.

The protein localises to the cell membrane. The protein resides in the nucleus membrane. It localises to the vacuole membrane. It catalyses the reaction L-seryl-[protein] + ATP = O-phospho-L-seryl-[protein] + ADP + H(+). The enzyme catalyses L-threonyl-[protein] + ATP = O-phospho-L-threonyl-[protein] + ADP + H(+). Casein kinases are operationally defined by their preferential utilization of acidic proteins such as caseins as substrates. Phosphorylates MON1, inhibiting the guanine nucleotide exchange factor activity of the MON1-CCZ1 complex, possibly by preventing its recruitment to membranes by small GTPase RAB5 homologs. This chain is Casein kinase I homolog 3 (YCK3), found in Saccharomyces cerevisiae (strain ATCC 204508 / S288c) (Baker's yeast).